A 398-amino-acid polypeptide reads, in one-letter code: Argininosuccinate synthase (398 aa).

8-16 (AYSGGLDTS) provides a ligand contact to ATP. Tyr87 is a binding site for L-citrulline. Gly117 serves as a coordination point for ATP. Residues Thr119, Asn123, and Asp124 each contribute to the L-aspartate site. Residue Asn123 coordinates L-citrulline. L-citrulline is bound by residues Arg127, Ser175, Glu260, and Tyr272.

The protein belongs to the argininosuccinate synthase family. Type 1 subfamily. As to quaternary structure, homotetramer.

It is found in the cytoplasm. The enzyme catalyses L-citrulline + L-aspartate + ATP = 2-(N(omega)-L-arginino)succinate + AMP + diphosphate + H(+). It functions in the pathway amino-acid biosynthesis; L-arginine biosynthesis; L-arginine from L-ornithine and carbamoyl phosphate: step 2/3. In Mycobacterium avium (strain 104), this protein is Argininosuccinate synthase.